The sequence spans 181 residues: Large ribosomal subunit protein uL6 (181 aa).

The protein belongs to the universal ribosomal protein uL6 family. Part of the 50S ribosomal subunit.

Functionally, this protein binds to the 23S rRNA, and is important in its secondary structure. It is located near the subunit interface in the base of the L7/L12 stalk, and near the tRNA binding site of the peptidyltransferase center. In Synechococcus sp. (strain JA-2-3B'a(2-13)) (Cyanobacteria bacterium Yellowstone B-Prime), this protein is Large ribosomal subunit protein uL6.